Reading from the N-terminus, the 186-residue chain is Lipid A acyltransferase PagP (186 aa).

A signal peptide spans 1–19 (MKRLISCLTIICALNRSAA). Catalysis depends on residues H60, D103, and S104.

The protein belongs to the lipid A palmitoyltransferase family. In terms of assembly, homodimer.

It localises to the cell outer membrane. It catalyses the reaction a lipid A + a 1,2-diacyl-sn-glycero-3-phosphocholine = a hepta-acyl lipid A + a 2-acyl-sn-glycero-3-phosphocholine. It carries out the reaction a lipid IVA + a 1,2-diacyl-sn-glycero-3-phosphocholine = a lipid IVB + a 2-acyl-sn-glycero-3-phosphocholine. The enzyme catalyses a lipid IIA + a 1,2-diacyl-sn-glycero-3-phosphocholine = a lipid IIB + a 2-acyl-sn-glycero-3-phosphocholine. In terms of biological role, transfers a fatty acid residue from the sn-1 position of a phospholipid to the N-linked hydroxyfatty acid chain on the proximal unit of lipid A or its precursors. Confers resistance to cationic antimicrobial peptides (CAMPs). Promotes the ability of L.pneumophila to replicate and/or survive in macrophages. Important for ability to kill macrophages and to promote the virulence. The polypeptide is Lipid A acyltransferase PagP (Legionella pneumophila).